A 230-amino-acid polypeptide reads, in one-letter code: 2,3-bisphosphoglycerate-dependent phosphoglycerate mutase (230 aa).

Residues 8 to 15 (RHGESEWN), 21 to 22 (TG), R60, 87 to 90 (ERHY), K98, 114 to 115 (RR), and 183 to 184 (GN) contribute to the substrate site. H9 acts as the Tele-phosphohistidine intermediate in catalysis. E87 acts as the Proton donor/acceptor in catalysis.

The protein belongs to the phosphoglycerate mutase family. BPG-dependent PGAM subfamily.

It catalyses the reaction (2R)-2-phosphoglycerate = (2R)-3-phosphoglycerate. It participates in carbohydrate degradation; glycolysis; pyruvate from D-glyceraldehyde 3-phosphate: step 3/5. Its function is as follows. Catalyzes the interconversion of 2-phosphoglycerate and 3-phosphoglycerate. The polypeptide is 2,3-bisphosphoglycerate-dependent phosphoglycerate mutase (Streptococcus mutans serotype c (strain ATCC 700610 / UA159)).